The following is a 110-amino-acid chain: Host transcription reprogramming factor 2 (110 aa).

An N-terminal signal peptide occupies residues 1–18; it reads MHLKASSILALLVIGANA. A C2H2-type zinc finger spans residues 68 to 96; that stretch reads IMCGYCGKRFWNKPDLEKHIKLKPSKGGH. The disordered stretch occupies residues 88-110; the sequence is KLKPSKGGHKGQPYKEHSWNRPT. Residues 100–110 are compositionally biased toward basic and acidic residues; sequence PYKEHSWNRPT.

The protein localises to the secreted. Its subcellular location is the host nucleus. Functionally, secreted effector that translocates into the nuclei of host cells to reprogram the expression of immunity-associated genes by binding to effector binding elements (EBEs) in rice. Binds the 5'-CCACCTCC-3' EBE of promoters from targeted rice genes and probably recruits a yet to be determined host repressor. Causes ambivalent immunity with increased susceptibility to the hemibiotrophic pathogens Magnaporthe oryzae and Xanthomonas oryzae pv. oryzae, but enhances resistance to Cochliobolus miyabeanus, a necrotrophic pathogen. In Pyricularia oryzae (strain 70-15 / ATCC MYA-4617 / FGSC 8958) (Rice blast fungus), this protein is Host transcription reprogramming factor 2.